A 201-amino-acid chain; its full sequence is Small ribosomal subunit protein uS4c (201 aa).

The disordered stretch occupies residues 20–43 (GLTSKRPRAGSDLRNQSRAGKKSQ). An S4 RNA-binding domain is found at 89–150 (MRLDNILFRL…EQKSRVMIQN (62 aa)).

Belongs to the universal ribosomal protein uS4 family. Part of the 30S ribosomal subunit. Contacts protein S5. The interaction surface between S4 and S5 is involved in control of translational fidelity.

It localises to the plastid. It is found in the chloroplast. One of the primary rRNA binding proteins, it binds directly to 16S rRNA where it nucleates assembly of the body of the 30S subunit. Functionally, with S5 and S12 plays an important role in translational accuracy. In Populus alba (White poplar), this protein is Small ribosomal subunit protein uS4c (rps4).